The following is a 105-amino-acid chain: Met repressor (105 aa).

It belongs to the MetJ family. Homodimer.

The protein resides in the cytoplasm. Its function is as follows. This regulatory protein, when combined with SAM (S-adenosylmethionine) represses the expression of the methionine regulon and of enzymes involved in SAM synthesis. The polypeptide is Met repressor (Histophilus somni (strain 129Pt) (Haemophilus somnus)).